Here is a 204-residue protein sequence, read N- to C-terminus: Dephospho-CoA kinase (204 aa).

A DPCK domain is found at 5 to 204; it reads VVGLTGGIGS…YLANLVKAML (200 aa). 13 to 18 serves as a coordination point for ATP; it reads GSGKSA.

It belongs to the CoaE family.

It is found in the cytoplasm. The catalysed reaction is 3'-dephospho-CoA + ATP = ADP + CoA + H(+). It functions in the pathway cofactor biosynthesis; coenzyme A biosynthesis; CoA from (R)-pantothenate: step 5/5. In terms of biological role, catalyzes the phosphorylation of the 3'-hydroxyl group of dephosphocoenzyme A to form coenzyme A. The protein is Dephospho-CoA kinase of Chromobacterium violaceum (strain ATCC 12472 / DSM 30191 / JCM 1249 / CCUG 213 / NBRC 12614 / NCIMB 9131 / NCTC 9757 / MK).